The sequence spans 201 residues: Fimbrial protein FimX (201 aa).

An N-terminal signal peptide occupies residues 1–21 (MQAKTFLLGAALAGVALAAHA). Residues cysteine 37 and cysteine 79 are joined by a disulfide bond.

Belongs to the fimbrial protein family.

Its subcellular location is the fimbrium. Functionally, bordetella pertussis is the causative agent of whooping cough. An essential step in the disease process is the attachment of the bacteria to the ciliated epithelium of the respiratory tract, enabling the organism to resist normal host-clearance mechanisms. It is unclear which bacterial cell surface component are responsible for adherence but the fimbriae of B.pertussis are prime candidates for being involved in this process. The protein is Fimbrial protein FimX (fimX) of Bordetella pertussis (strain Tohama I / ATCC BAA-589 / NCTC 13251).